The following is a 353-amino-acid chain: Biotin synthase (353 aa).

A compositionally biased stretch (low complexity) spans 1–22; that stretch reads MTACSTTPTTSATSAQPAAGSP. Residues 1–30 are disordered; that stretch reads MTACSTTPTTSATSAQPAAGSPLQWHARPS. The Radical SAM core domain maps to 72–299; the sequence is GDIELATLLS…TARVRLSAGR (228 aa). Positions 87, 91, and 94 each coordinate [4Fe-4S] cluster. [2Fe-2S] cluster contacts are provided by Cys-131, Cys-162, Cys-222, and Arg-294.

It belongs to the radical SAM superfamily. Biotin synthase family. In terms of assembly, homodimer. [4Fe-4S] cluster serves as cofactor. Requires [2Fe-2S] cluster as cofactor.

It catalyses the reaction (4R,5S)-dethiobiotin + (sulfur carrier)-SH + 2 reduced [2Fe-2S]-[ferredoxin] + 2 S-adenosyl-L-methionine = (sulfur carrier)-H + biotin + 2 5'-deoxyadenosine + 2 L-methionine + 2 oxidized [2Fe-2S]-[ferredoxin]. It functions in the pathway cofactor biosynthesis; biotin biosynthesis; biotin from 7,8-diaminononanoate: step 2/2. Functionally, catalyzes the conversion of dethiobiotin (DTB) to biotin by the insertion of a sulfur atom into dethiobiotin via a radical-based mechanism. In Delftia acidovorans (strain DSM 14801 / SPH-1), this protein is Biotin synthase.